Here is a 310-residue protein sequence, read N- to C-terminus: Prohibitin-2 (310 aa).

A helical; Signal-anchor for type II membrane protein membrane pass occupies residues 38-58 (FAGLGGLLLLGGGALFINNAL). Residues 130–144 (DVVQLPTIYRTLGQD) are interaction with ATG8. Positions 138-141 (YRTL) match the AIM motif. A coiled-coil region spans residues 212-253 (NAVEAKQIAQQDAQRAAFVVDKARQEKQGMVVRAQGEAKSAE).

It belongs to the prohibitin family. As to quaternary structure, the mitochondrial prohibitin complex consists of two subunits (PHB1 and PHB2). The subunits assemble into a membrane-associated ring-shaped supercomplex of approximately 1 mDa. The mitochondrial prohibitin complex interacts with the m-AAA protease, a heterohexamer composed of YTA12/RCA1 and YTA10/AFG3. The mitochondrial prohibitin complex interacts with ATG8 and the interaction may support mitophagosome assembly. In terms of processing, the N-terminus is blocked.

It localises to the mitochondrion inner membrane. Prohibitin probably acts as a holdase/unfoldase for the stabilization of newly synthesized mitochondrial proteins. Involved in mitophagy; may act as an adapter for ATG8 that supports mitophagosome assembly. Negatively regulates the proteolytic processing of ATG32 via the i-AAA protease. Acts as a negative regulator of the m-AAA protease. This chain is Prohibitin-2 (PHB2), found in Saccharomyces cerevisiae (strain ATCC 204508 / S288c) (Baker's yeast).